The sequence spans 115 residues: U3-lycotoxin-Ls1v (115 aa).

Positions 1 to 20 (MKFVLLFGVLLVTLFSHSSA) are cleaved as a signal peptide. The propeptide occupies 21 to 44 (EMLDDFDQADEDELLSLIEKEEAR). Intrachain disulfides connect C48–C63, C55–C72, C62–C87, and C74–C85.

Belongs to the neurotoxin 19 (CSTX) family. 01 subfamily. Expressed by the venom gland.

The protein localises to the secreted. The chain is U3-lycotoxin-Ls1v from Lycosa singoriensis (Wolf spider).